The sequence spans 243 residues: Phosphoadenosine 5'-phosphosulfate reductase (243 aa).

The active-site Nucleophile; cysteine thiosulfonate intermediate is the C239.

Belongs to the PAPS reductase family. CysH subfamily.

The protein localises to the cytoplasm. The enzyme catalyses [thioredoxin]-disulfide + sulfite + adenosine 3',5'-bisphosphate + 2 H(+) = [thioredoxin]-dithiol + 3'-phosphoadenylyl sulfate. Its pathway is sulfur metabolism; hydrogen sulfide biosynthesis; sulfite from sulfate: step 3/3. In terms of biological role, catalyzes the formation of sulfite from phosphoadenosine 5'-phosphosulfate (PAPS) using thioredoxin as an electron donor. This Proteus mirabilis (strain HI4320) protein is Phosphoadenosine 5'-phosphosulfate reductase.